The sequence spans 620 residues: UvrABC system protein C (620 aa).

Residues 13–92 form the GIY-YIG domain; it reads DKPGVYIMKN…IKKYSPRYNI (80 aa). The UVR domain maps to 204–239; sequence TSIIKKLKLEMEKAAEELEFEKAAKIRDRILAIELI.

It belongs to the UvrC family. As to quaternary structure, interacts with UvrB in an incision complex.

It is found in the cytoplasm. The UvrABC repair system catalyzes the recognition and processing of DNA lesions. UvrC both incises the 5' and 3' sides of the lesion. The N-terminal half is responsible for the 3' incision and the C-terminal half is responsible for the 5' incision. This Clostridium perfringens (strain ATCC 13124 / DSM 756 / JCM 1290 / NCIMB 6125 / NCTC 8237 / Type A) protein is UvrABC system protein C.